An 886-amino-acid chain; its full sequence is MAQPLVKKDDDHDDELEYSPFMGIEKGAVLQEARVFNDPQVDPRRCSQVITKLLYLLNQGESFTKVEATEVFFSVTKLFQSKDTGLRRMVYLIIKELSPSSDEVIIVTSSLMKDMNSKIDMYRANAIRVLCRIIDGTLLTQIERYLKQAIVDKNPVVSSAALVSGLHLLKTNPEIVKRWSNEVQEGIQSRSALVQFHALALLHQIRQNDRLAVSKLVGSLTRGSVRSPLAQCLLIRYTSQVIRDMANHGQSGERPFYEFLESCLRHKAEMVILEAARAITELDGVTSRELTPAITVLQLFLSSPRPVLRFAAVRTLNKVAMTHPMAVTNCNIDMESLISDQNRSIATLAITTLLKTGNESSVERLMKQITNFMSDIADEFKIVVVDAIRSLCVKFPLKYRSLMTFLSNILREEGGFEYKRAIVDSIVTIIRDIPDAKESGLLHLCEFIEDCEFTYLSTQILHFLGIEGPNTSDPSKYIRYIYNRVHLENATVRAAAVSTLAKFGFMVESLKPRITVLLKRCIYDSDDEVRDRATLYLSVLGGDGTVDTDKESKDFLFGSLEVPLVNMETSLKNYEPSEEAFDINSVPKEVKSQPLAEKKAQGKKPTGLGAPPAAPASGFDGYERLLSSIPEFAAFGKLFKSSLPVELTEAETEYAVNVVKHIFDSHVVFQYNCTNTIPEQLLERVNVIVDASEAEEFSEVTSKALNSLPYDSPGQAFVVFEKPAGVPAVGKFSNTLTFVVKEVDPSTGEAEDDGVEDEYQLEDLEVVAGDYMVKVGVSNFRNAWESMDEEDERVDEYGLGQRESLGEAVKAVMDLLGMQTCEGTETIPLNARSHTCLLSGVYIGNVKVLVRAQFGMDSSKDIAMKLTVRAEDVSVAEAIHEIVASG.

HEAT repeat units follow at residues 66–103, 288–325, 327–359, 360–397, and 472–509; these read VEAT…SSDE, RELT…THPM, VTNC…TGNE, SSVE…KFPL, and SDPS…MVES. The tract at residues 592-613 is disordered; it reads SQPLAEKKAQGKKPTGLGAPPA.

The protein belongs to the COPG family. Oligomeric complex that consists of at least the alpha, beta, beta', gamma, delta, epsilon and zeta subunits.

It localises to the cytoplasm. The protein resides in the golgi apparatus membrane. Its subcellular location is the cytoplasmic vesicle. The protein localises to the COPI-coated vesicle membrane. In terms of biological role, the coatomer is a cytosolic protein complex that binds to dilysine motifs and reversibly associates with Golgi non-clathrin-coated vesicles, which further mediate biosynthetic protein transport from the ER, via the Golgi up to the trans Golgi network. Coatomer complex is required for budding from Golgi membranes, and is essential for the retrograde Golgi-to-ER transport of dilysine-tagged proteins. This chain is Coatomer subunit gamma, found in Arabidopsis thaliana (Mouse-ear cress).